The sequence spans 119 residues: Large ribosomal subunit protein bL17 (119 aa).

The protein belongs to the bacterial ribosomal protein bL17 family. As to quaternary structure, part of the 50S ribosomal subunit. Contacts protein L32.

In Acholeplasma laidlawii (strain PG-8A), this protein is Large ribosomal subunit protein bL17.